Here is a 323-residue protein sequence, read N- to C-terminus: MGLFDRGVQMLLTTVGAFAAFSLMTIAVGTDYWLYSRGVCKTKSVSENETSKKNEEVMTHSGLWRTCCLEGNFKGLCKQIDHFPEDADYEADTAEYFLRAVRASSIFPILSVILLFMGGLCIAASEFYKTRHNIILSAGIFFVSAGLSNIIGIIVYISANAGDPSKSDSKKNSYSYGWSFYFGALSFIIAEMVGVLAVHMFIDRHKQLRATARATDYLQASAITRIPSYRYRYQRRSRSSSRSTEPSHSRDASPVGIKGFNTLPSTEISMYTLSRDPLKAATTPTATYNSDRDNSFLQVHNCIQKENKDSLHSNTANRRTTPV.

The helical transmembrane segment at 10–30 (MLLTTVGAFAAFSLMTIAVGT) threads the bilayer. A glycan (N-linked (GlcNAc...) asparagine) is linked at Asn48. The next 3 membrane-spanning stretches (helical) occupy residues 104 to 124 (SSIFPILSVILLFMGGLCIAA), 134 to 154 (IILSAGIFFVSAGLSNIIGII), and 182 to 202 (FGALSFIIAEMVGVLAVHMFI). Residues 233–261 (YQRRSRSSSRSTEPSHSRDASPVGIKGFN) form a disordered region. At Ser253 the chain carries Phosphoserine. Tyr271 carries the phosphotyrosine modification. Thr321 carries the phosphothreonine modification.

Belongs to the PMP-22/EMP/MP20 family. CACNG subfamily. In terms of assembly, the L-type calcium channel is composed of five subunits: alpha-1, alpha-2/delta, beta and gamma. Interacts with the PDZ domains of DLG4/PSD-95 and DLG1/SAP97. May interact with GOPC. Acts as an auxiliary subunit for AMPA-selective glutamate receptors (AMPARs). Found in a complex with GRIA1, GRIA2, GRIA3, GRIA4, CNIH2, CNIH3, CACNG3, CACNG4, CACNG5, CACNG7 and CACNG8. Interacts with GRIA1 and GRIA2. Interacts with MPP2. Phosphorylation of Thr-321 impairs interaction with DLG1 and DLG4. Brain.

Its subcellular location is the membrane. The protein localises to the synapse. It is found in the synaptosome. Regulates the trafficking and gating properties of AMPA-selective glutamate receptors (AMPARs). Promotes their targeting to the cell membrane and synapses and modulates their gating properties by slowing their rates of activation, deactivation and desensitization. Does not show subunit-specific AMPA receptor regulation and regulates all AMPAR subunits. Thought to stabilize the calcium channel in an inactivated (closed) state. This is Voltage-dependent calcium channel gamma-2 subunit (CACNG2) from Homo sapiens (Human).